The sequence spans 371 residues: Protein OSB2, chloroplastic (371 aa).

A chloroplast-targeting transit peptide spans M1–R20. The disordered stretch occupies residues G45 to E64. An SSB domain is found at V97 to Q195. PDF region regions lie at residues W237–E289 and W312–P360.

As to expression, expressed in the floral abscission zone.

It localises to the plastid. The protein localises to the chloroplast. Functionally, binds preferentially single-stranded DNA. Does not bind to RNA. In Arabidopsis thaliana (Mouse-ear cress), this protein is Protein OSB2, chloroplastic (OSB2).